The following is a 421-amino-acid chain: DNA (cytosine-5)-methyltransferase 3-like (421 aa).

The span at 1–14 (MGSRETPSSCSKTL) shows a compositional bias: polar residues. The segment at 1–39 (MGSRETPSSCSKTLETLDLETSDSSSPDADSPLEEQWLK) is disordered. Residues 75 to 207 (EVKVNRRSIE…LKAFHDQEGA (133 aa)) form the ADD domain. A GATA-type; atypical zinc finger spans residues 86 to 116 (ICLCCGTLQVYTRHPLFEGGLCAPCKDKFLE). The PHD-type; atypical zinc finger occupies 127-183 (QSYCTICCSGGTLFICESPDCTRCYCFECVDILVGPGTSERINAMACWVCFLCLPFS).

As to quaternary structure, homodimer. Heterotetramer composed of 1 DNMT3A homodimer and 2 DNMT3L subunits (DNMT3L-DNMT3A-DNMT3A-DNMT3L). Interacts with histone H3 (via N-terminus); interaction is strongly inhibited by methylation at lysine 4 (H3K4me). Interacts with EZH2; the interaction is direct. Interacts with SPOCD1. In terms of tissue distribution, expressed in testis, thymus, ovary, and heart.

It localises to the nucleus. Functionally, catalytically inactive regulatory factor of DNA methyltransferases that can either promote or inhibit DNA methylation depending on the context. Essential for the function of DNMT3A and DNMT3B: activates DNMT3A and DNMT3B by binding to their catalytic domain. Acts by accelerating the binding of DNA and S-adenosyl-L-methionine (AdoMet) to the methyltransferases and dissociates from the complex after DNA binding to the methyltransferases. Recognizes unmethylated histone H3 lysine 4 (H3K4me0) and induces de novo DNA methylation by recruitment or activation of DNMT3. Plays a key role in embryonic stem cells and germ cells. In germ cells, required for the methylation of imprinted loci together with DNMT3A. In male germ cells, specifically required to methylate retrotransposons, preventing their mobilization. Plays a key role in embryonic stem cells (ESCs) by acting both as an positive and negative regulator of DNA methylation. While it promotes DNA methylation of housekeeping genes together with DNMT3A and DNMT3B, it also acts as an inhibitor of DNA methylation at the promoter of bivalent genes. Interacts with the EZH2 component of the PRC2/EED-EZH2 complex, preventing interaction of DNMT3A and DNMT3B with the PRC2/EED-EZH2 complex, leading to maintain low methylation levels at the promoters of bivalent genes. Promotes differentiation of ESCs into primordial germ cells by inhibiting DNA methylation at the promoter of RHOX5, thereby activating its expression. The polypeptide is DNA (cytosine-5)-methyltransferase 3-like (Dnmt3l) (Mus musculus (Mouse)).